Here is a 219-residue protein sequence, read N- to C-terminus: AA11 family lytic polysaccharide monooxygenase A (219 aa).

The N-terminal stretch at 1–18 is a signal peptide; it reads MMLSKVVMGLLTASLAAA. H19 lines the Cu(+) pocket. Disulfide bonds link C58–C154, C94–C116, and C185–C218. An N-linked (GlcNAc...) asparagine glycan is attached at N80. H89 is a Cu(+) binding site.

It belongs to the polysaccharide monooxygenase AA11 family. The cofactor is Cu(2+).

Functionally, lytic polysaccharide monooxygenase (LPMO) that depolymerizes chitin via the oxidation of scissile beta-(1-4)-glycosidic bonds, yielding C1 or C4 oxidation products. Catalysis by LPMOs requires the reduction of the active-site copper from Cu(II) to Cu(I) by a reducing agent and H(2)O(2) or O(2) as a cosubstrate. Has considerable affinity for alpha-chitin and, more so, beta-chitin. Active toward both alpha-chitin and beta-chitin allomorphs and enhances chitin degradation by an endoacting chitinase, in particular for alpha-chitin, and so plays a role in fungal chitin turnover. The catalytic activity increases when supplying reactions with hydrogen peroxide, confirming that it has peroxygenase activity. Does not show activity on phosphoric acid-swollen cellulose (PASC), Avicel, tamarind xyloglucan, birchwood xylan, beechwood xylan, acetyl glucuronoxylan from aspen, ivory nut mannan, acetylated konjac glucomannan, potato starch, heparin, hyaluronic acid, and chitosan. The chain is AA11 family lytic polysaccharide monooxygenase A from Aspergillus fumigatus (strain CBS 144.89 / FGSC A1163 / CEA10) (Neosartorya fumigata).